The following is a 570-amino-acid chain: Methionine--tRNA ligase (570 aa).

A 'HIGH' region motif is present at residues 11-21 (PYVQTVPHLGN). The Zn(2+) site is built by Cys143, Cys146, Cys156, and Cys159. A 'KMSKS' region motif is present at residues 333–337 (KFSKS). Lys336 contributes to the ATP binding site.

Belongs to the class-I aminoacyl-tRNA synthetase family. MetG type 1 subfamily. Zn(2+) serves as cofactor.

It localises to the cytoplasm. The catalysed reaction is tRNA(Met) + L-methionine + ATP = L-methionyl-tRNA(Met) + AMP + diphosphate. Functionally, is required not only for elongation of protein synthesis but also for the initiation of all mRNA translation through initiator tRNA(fMet) aminoacylation. The polypeptide is Methionine--tRNA ligase (Pyrobaculum aerophilum (strain ATCC 51768 / DSM 7523 / JCM 9630 / CIP 104966 / NBRC 100827 / IM2)).